The primary structure comprises 105 residues: MADWSGEYISPYAEHGKKSEQVKKITVSIPIKVLEILTNERTRRQIKNLRHATNSELLCEAFLHAFTGQPLPTDDDLMKERSDEIPEEAKAKMRELGIDPDNWQY.

Belongs to the MetJ family. In terms of assembly, homodimer.

The protein localises to the cytoplasm. Functionally, this regulatory protein, when combined with SAM (S-adenosylmethionine) represses the expression of the methionine regulon and of enzymes involved in SAM synthesis. This chain is Met repressor, found in Actinobacillus pleuropneumoniae serotype 7 (strain AP76).